The primary structure comprises 1446 residues: ABC-type transporter oblD (1446 aa).

Asn-9, Asn-28, Asn-222, Asn-281, and Asn-305 each carry an N-linked (GlcNAc...) asparagine glycan. An ABC transporter 1 domain is found at 104 to 357; that stretch reads LEVLSLVSKA…FLDMGFVCPD (254 aa). The next 6 membrane-spanning stretches (helical) occupy residues 468 to 488, 502 to 522, 548 to 568, 577 to 597, 610 to 630, and 719 to 739; these read VTIS…SIFY, ALLF…MLTL, MIMD…VLYF, GAFF…SMFF, ALPF…FTIP, and IGVI…ATDF. Residues 796 to 1038 enclose the ABC transporter 2 domain; sequence FQWKDVCFDI…ILIDYFVRNG (243 aa). 832–839 lines the ATP pocket; sequence GVSGAGKT. The next 5 membrane-spanning stretches (helical) occupy residues 1147–1167, 1177–1197, 1217–1237, 1265–1285, and 1301–1321; these read ALCV…PNTI, IFML…HFVA, FIIS…VLMF, LMVW…IAAF, and LCLI…FWIF. N-linked (GlcNAc...) asparagine glycans are attached at residues Asn-1344 and Asn-1359. Residues 1412–1432 traverse the membrane as a helical segment; the sequence is FGLMWVFIVFNIFAACLLYWW.

It belongs to the ABC transporter superfamily. ABCG family. PDR (TC 3.A.1.205) subfamily.

It localises to the cell membrane. Its function is as follows. ABC-type transporter; part of the gene cluster that mediates the biosynthesis of the sesterterpenes ophiobolins, fungal phytotoxins with potential anti-cancer activities. Acts as a specific transporter involved in ophiobolins secretion. This Aspergillus clavatus (strain ATCC 1007 / CBS 513.65 / DSM 816 / NCTC 3887 / NRRL 1 / QM 1276 / 107) protein is ABC-type transporter oblD.